Here is a 104-residue protein sequence, read N- to C-terminus: ATP-dependent Clp protease adapter protein ClpS (104 aa).

This sequence belongs to the ClpS family. Binds to the N-terminal domain of the chaperone ClpA.

Its function is as follows. Involved in the modulation of the specificity of the ClpAP-mediated ATP-dependent protein degradation. In Desulforapulum autotrophicum (strain ATCC 43914 / DSM 3382 / VKM B-1955 / HRM2) (Desulfobacterium autotrophicum), this protein is ATP-dependent Clp protease adapter protein ClpS.